The chain runs to 303 residues: Sulfate adenylyltransferase subunit 2 (303 aa).

The protein belongs to the PAPS reductase family. CysD subfamily. In terms of assembly, heterodimer composed of CysD, the smaller subunit, and CysN.

It carries out the reaction sulfate + ATP + H(+) = adenosine 5'-phosphosulfate + diphosphate. It functions in the pathway sulfur metabolism; hydrogen sulfide biosynthesis; sulfite from sulfate: step 1/3. Its function is as follows. With CysN forms the ATP sulfurylase (ATPS) that catalyzes the adenylation of sulfate producing adenosine 5'-phosphosulfate (APS) and diphosphate, the first enzymatic step in sulfur assimilation pathway. APS synthesis involves the formation of a high-energy phosphoric-sulfuric acid anhydride bond driven by GTP hydrolysis by CysN coupled to ATP hydrolysis by CysD. This chain is Sulfate adenylyltransferase subunit 2, found in Bacteroides fragilis (strain YCH46).